The primary structure comprises 686 residues: MSTFLLEIGLEEVPAHLVTSSESQLVARTKEFLAAHRLTVGDIKPFSTPRRLALQLCDVAEESEALSEEKRGPSVERAKDENGEWSKAAQGFARGQGATPEAFEERDGYVWLTKHTTGVPANQILSQIGEEVVSQMKFTTYMKWANHSFLYVRPIRWLVALLDEQVINFNVLDIATGRVTRGHRFLSTEHVTISDAQAYEETLQSAYVLADAENRKAQIKSQLETIANRNHWVLSLDNAPAQDLLEEVNNIVEWPTAFSGSFDQKYLEVPDEVLITSMREHQRFFYVRDTTGKLLPHFLSVRNGDTAHLDNVIAGNEKVLVARLEDAEFFYREDQQKKIADYMAKVKTLVFHEKIGTVYEHMQRVGLLAEKLADALDFDDDKKTDLARAAEIYKFDLMTGMVGEFDELQGVMGEHYARLFGENERVATAIREHYMPTSANGNIAKSDVGAVLAIADKLDAIVTFFAANLIPSGSNDPYGLRRAATGVVRTLTTKHWHIALQPVLAEFMAATGTVTASADLMAVLSFVVDRVRKLALDDDIRQDIVSAGTDNFATADIVYLTDRIQVLANHAHDNNFREVISALTRVARLAEKTPVSLNVNPQLFENETEKALYAATSELQLVALEANGAEALYQALAALQMPISAYFDATMVNVDNEQIKNNRYAQLNIINQLIAGLGNLEDIVIK.

A disordered region spans residues 65 to 99 (ALSEEKRGPSVERAKDENGEWSKAAQGFARGQGAT). Positions 67 to 84 (SEEKRGPSVERAKDENGE) are enriched in basic and acidic residues.

It belongs to the class-II aminoacyl-tRNA synthetase family. Tetramer of two alpha and two beta subunits.

It localises to the cytoplasm. It catalyses the reaction tRNA(Gly) + glycine + ATP = glycyl-tRNA(Gly) + AMP + diphosphate. This is Glycine--tRNA ligase beta subunit from Leuconostoc citreum (strain KM20).